A 475-amino-acid polypeptide reads, in one-letter code: Argininosuccinate lyase (475 aa).

It belongs to the lyase 1 family. Argininosuccinate lyase subfamily.

Its subcellular location is the cytoplasm. The catalysed reaction is 2-(N(omega)-L-arginino)succinate = fumarate + L-arginine. Its pathway is amino-acid biosynthesis; L-arginine biosynthesis; L-arginine from L-ornithine and carbamoyl phosphate: step 3/3. This Streptomyces griseus subsp. griseus (strain JCM 4626 / CBS 651.72 / NBRC 13350 / KCC S-0626 / ISP 5235) protein is Argininosuccinate lyase.